The chain runs to 94 residues: ATP synthase subunit c (94 aa).

2 helical membrane passes run 15–35 (VSVG…WGLI) and 61–81 (GGLM…FIFA).

The protein belongs to the ATPase C chain family. F-type ATPases have 2 components, F(1) - the catalytic core - and F(0) - the membrane proton channel. F(1) has five subunits: alpha(3), beta(3), gamma(1), delta(1), epsilon(1). F(0) has three main subunits: a(1), b(2) and c(10-14). The alpha and beta chains form an alternating ring which encloses part of the gamma chain. F(1) is attached to F(0) by a central stalk formed by the gamma and epsilon chains, while a peripheral stalk is formed by the delta and b chains.

The protein resides in the cell inner membrane. Its function is as follows. F(1)F(0) ATP synthase produces ATP from ADP in the presence of a proton or sodium gradient. F-type ATPases consist of two structural domains, F(1) containing the extramembraneous catalytic core and F(0) containing the membrane proton channel, linked together by a central stalk and a peripheral stalk. During catalysis, ATP synthesis in the catalytic domain of F(1) is coupled via a rotary mechanism of the central stalk subunits to proton translocation. In terms of biological role, key component of the F(0) channel; it plays a direct role in translocation across the membrane. A homomeric c-ring of between 10-14 subunits forms the central stalk rotor element with the F(1) delta and epsilon subunits. This is ATP synthase subunit c from Nitrosococcus oceani (strain ATCC 19707 / BCRC 17464 / JCM 30415 / NCIMB 11848 / C-107).